Reading from the N-terminus, the 253-residue chain is Histone H1.4 (253 aa).

Residues 1-33 (MSDVAVAADTTETPAAPTKASKATKASKATKAS) show a composition bias toward low complexity. The interval 1–43 (MSDVAVAADTTETPAAPTKASKATKASKATKASKATKAKTTKV) is disordered. Residue S2 is modified to N-acetylserine. An H15 domain is found at 51-127 (AHPPFINMVT…GANGRFRLAE (77 aa)). The disordered stretch occupies residues 134-253 (KSPAAAKKDA…KKAPAAAPEA (120 aa)). Composition is skewed to basic and acidic residues over residues 139–149 (AKKDATGEKKA) and 188–200 (AAGDKAKKTEVKV). 2 stretches are compositionally biased toward basic residues: residues 201–210 (KKVKSPKKIA) and 234–244 (APKKAAAKPAK).

Belongs to the histone H1/H5 family.

The protein resides in the nucleus. The protein localises to the chromosome. In terms of biological role, histones H1 are necessary for the condensation of nucleosome chains into higher-order structures. This is Histone H1.4 (hil-4) from Caenorhabditis elegans.